A 132-amino-acid chain; its full sequence is Small ribosomal subunit protein uS8 (132 aa).

Belongs to the universal ribosomal protein uS8 family. As to quaternary structure, part of the 30S ribosomal subunit. Contacts proteins S5 and S12.

In terms of biological role, one of the primary rRNA binding proteins, it binds directly to 16S rRNA central domain where it helps coordinate assembly of the platform of the 30S subunit. The chain is Small ribosomal subunit protein uS8 from Clostridium beijerinckii (strain ATCC 51743 / NCIMB 8052) (Clostridium acetobutylicum).